Reading from the N-terminus, the 268-residue chain is Interleukin-1 alpha (268 aa).

A propeptide spanning residues 1–112 (MAKVPDLFED…DTEEEIIKPR (112 aa)) is cleaved from the precursor. At K82 the chain carries N6-acetyllysine. Positions 82–86 (KKRRL) are nuclear localization signal (NLS). The residue at position 87 (S87) is a Phosphoserine. N-linked (GlcNAc...) asparagine glycans are attached at residues N102 and N141.

Belongs to the IL-1 family. In terms of assembly, monomer. Interacts with TMED10; the interaction mediates the translocation from the cytoplasm into the ERGIC (endoplasmic reticulum-Golgi intermediate compartment) and thereby secretion. Interacts with IL1R1. Interacts with S100A13; this interaction is the first step in the export of IL1A, followed by direct translocation of this complex across the plasma membrane. Post-translationally, acetylated within its nuclear localization sequence, which impacts subcellular localization. Proteolytic processed by CAPN1 in a calcium-dependent manner. Cleavage from 31 kDa precursor to 18 kDa biologically active molecules. In terms of processing, phosphorylated. Phosphorylation greatly enhances susceptibility to digestion and promotes the conversion of pre-IL1A alpha to the biologically active IL1A.

Its subcellular location is the nucleus. It localises to the cytoplasm. It is found in the secreted. Functionally, cytokine constitutively present intracellularly in nearly all resting non-hematopoietic cells that plays an important role in inflammation and bridges the innate and adaptive immune systems. After binding to its receptor IL1R1 together with its accessory protein IL1RAP, forms the high affinity interleukin-1 receptor complex. Signaling involves the recruitment of adapter molecules such as MYD88, IRAK1 or IRAK4. In turn, mediates the activation of NF-kappa-B and the three MAPK pathways p38, p42/p44 and JNK pathways. Within the cell, acts as an alarmin and cell death results in its liberation in the extracellular space after disruption of the cell membrane to induce inflammation and alert the host to injury or damage. In addition to its role as a danger signal, which occurs when the cytokine is passively released by cell necrosis, directly senses DNA damage and acts as signal for genotoxic stress without loss of cell integrity. The polypeptide is Interleukin-1 alpha (IL1A) (Capra hircus (Goat)).